The chain runs to 297 residues: Nucleotide-binding protein Bphy_0322 (297 aa).

An ATP-binding site is contributed by G8–S15. D57–S60 contributes to the GTP binding site.

This sequence belongs to the RapZ-like family.

Displays ATPase and GTPase activities. The protein is Nucleotide-binding protein Bphy_0322 of Paraburkholderia phymatum (strain DSM 17167 / CIP 108236 / LMG 21445 / STM815) (Burkholderia phymatum).